A 396-amino-acid chain; its full sequence is Cysteine desulfurase (396 aa).

Residues Gly-71–Thr-72, Asn-148, Gln-176, and Ser-196–His-198 contribute to the pyridoxal 5'-phosphate site. Lys-199 carries the post-translational modification N6-(pyridoxal phosphate)lysine. Residue Thr-231 participates in pyridoxal 5'-phosphate binding. Cys-319 serves as the catalytic Cysteine persulfide intermediate. Residue Cys-319 participates in [2Fe-2S] cluster binding.

This sequence belongs to the class-V pyridoxal-phosphate-dependent aminotransferase family. NifS/IscS subfamily. As to quaternary structure, homodimer. Pyridoxal 5'-phosphate is required as a cofactor.

It catalyses the reaction (sulfur carrier)-H + L-cysteine = (sulfur carrier)-SH + L-alanine. Its function is as follows. Catalyzes the removal of elemental sulfur atoms from cysteine to produce alanine. Seems to participate in the biosynthesis of the nitrogenase metalloclusters by providing the inorganic sulfur required for the Fe-S core formation. This is Cysteine desulfurase from Azotobacter chroococcum mcd 1.